Consider the following 696-residue polypeptide: Mitosis initiation protein fs(1)Ya (696 aa).

3 disordered regions span residues 245–285, 336–379, and 457–492; these read NAST…RAWK, EHSS…YSTS, and IKFETPPKSSQQMRSNGEGDETKDQFFTPEPGTPEI. 2 stretches are compositionally biased toward low complexity: residues 270 to 281 and 361 to 379; these read QQQQQQQQPLQQ and SESSASEVNSGSSSSYSTS. Residues 448–696 are rich in charged AA; sequence TGAGINKKQI…REPIERMRRQ (249 aa). Thr-478, Thr-484, and Thr-489 each carry phosphothreonine. Short sequence motifs (nuclear localization signal) lie at residues 512–520 and 534–538; these read PKKDKPKEK and QPRVR. Disordered regions lie at residues 555–586 and 603–696; these read DVGEPEVVDAEEEDEVFRPTNASTCNDKKLEA and PASL…MRRQ. The segment covering 557–569 has biased composition (acidic residues); sequence GEPEVVDAEEEDE. 2 stretches are compositionally biased toward basic and acidic residues: residues 607–624 and 685–696; these read RGEREKDRDRDRDSDKEN and RPREPIERMRRQ.

It is found in the nucleus envelope. The protein localises to the nucleus. It localises to the nucleoplasm. The protein resides in the cytoplasm. Functionally, cell cycle-dependent nuclear envelope component required for embryonic mitosis. This is Mitosis initiation protein fs(1)Ya (fs(1)Ya) from Drosophila melanogaster (Fruit fly).